The chain runs to 1132 residues: Tyrosine-protein kinase JAK2 (1132 aa).

Residues 1–239 form an interaction with cytokine/interferon/growth hormone receptors region; it reads MGMACLTMTE…RYRFRRFIQQ (239 aa). The FERM domain maps to 37-380; sequence PVLQVYLYHS…GYYRLTADAH (344 aa). The residue at position 119 (Tyr119) is a Phosphotyrosine; by autocatalysis. A phosphotyrosine mark is found at Tyr372 and Tyr373. An SH2; atypical domain is found at 401-482; sequence HGPISMDFAI…NLKDLLNCYQ (82 aa). Phosphoserine is present on Ser523. One can recognise a Protein kinase 1 domain in the interval 545-809; the sequence is LIFNESLGQG…AVIRDLNSLF (265 aa). Residues Tyr570 and Tyr813 each carry the phosphotyrosine modification. The 276-residue stretch at 849 to 1124 folds into the Protein kinase 2 domain; that stretch reads LKFLQQLGKG…SFRDLSLRVD (276 aa). 855–863 lines the ATP pocket; sequence LGKGNFGSV. Position 868 is a phosphotyrosine; by autocatalysis (Tyr868). Residue Lys882 participates in ATP binding. Tyr966 and Tyr972 each carry phosphotyrosine; by autocatalysis. Catalysis depends on Asp976, which acts as the Proton acceptor. Tyr1007 and Tyr1008 each carry phosphotyrosine; by autocatalysis.

It belongs to the protein kinase superfamily. Tyr protein kinase family. JAK subfamily. In terms of assembly, interacts with IL23R, SKB1 and STAM2. Interacts with EPOR. Interacts with LYN. Interacts with SIRPA. Interacts with SH2B1. Interacts with TEC. Interacts with IFNGR2 (via intracellular domain). Interacts with LEPR (Isoform B). Interacts with HSP90AB1; promotes functional activation in a heat shock-dependent manner. Interacts with STRA6. Interacts with ASB2; the interaction targets JAK2 for Notch-induced proteasomal degradation. Interacts with MPL/TPOR. Mg(2+) is required as a cofactor. Autophosphorylated, leading to regulate its activity. Leptin promotes phosphorylation on tyrosine residues, including phosphorylation on Tyr-813. Autophosphorylation on Tyr-119 in response to EPO down-regulates its kinase activity. Autophosphorylation on Tyr-868, Tyr-966 and Tyr-972 in response to growth hormone (GH) are required for maximal kinase activity. Also phosphorylated by TEC. Phosphorylated on tyrosine residues in response to interferon gamma signaling. Phosphorylated on tyrosine residues in response to a signaling cascade that is activated by increased cellular retinol. Post-translationally, undergoes Notch-induced ubiquitination and subsequent proteasomal degradation which is mediated by ASB1 or ASB2, the substrate-recognition components of probable ECS E3 ubiquitin-protein ligase complexes. Ubiquitously expressed throughout most tissues.

It localises to the endomembrane system. It is found in the cytoplasm. The protein localises to the nucleus. The catalysed reaction is L-tyrosyl-[protein] + ATP = O-phospho-L-tyrosyl-[protein] + ADP + H(+). With respect to regulation, regulated by autophosphorylation, can both activate or decrease activity. Heme regulates its activity by enhancing the phosphorylation on Tyr-1007 and Tyr-1008. Functionally, non-receptor tyrosine kinase involved in various processes such as cell growth, development, differentiation or histone modifications. Mediates essential signaling events in both innate and adaptive immunity. In the cytoplasm, plays a pivotal role in signal transduction via its association with type I receptors such as growth hormone (GHR), prolactin (PRLR), leptin (LEPR), erythropoietin (EPOR), thrombopoietin receptor (MPL/TPOR); or type II receptors including IFN-alpha, IFN-beta, IFN-gamma and multiple interleukins. Following ligand-binding to cell surface receptors, phosphorylates specific tyrosine residues on the cytoplasmic tails of the receptor, creating docking sites for STATs proteins. Subsequently, phosphorylates the STATs proteins once they are recruited to the receptor. Phosphorylated STATs then form homodimer or heterodimers and translocate to the nucleus to activate gene transcription. For example, cell stimulation with erythropoietin (EPO) during erythropoiesis leads to JAK2 autophosphorylation, activation, and its association with erythropoietin receptor (EPOR) that becomes phosphorylated in its cytoplasmic domain. Then, STAT5 (STAT5A or STAT5B) is recruited, phosphorylated and activated by JAK2. Once activated, dimerized STAT5 translocates into the nucleus and promotes the transcription of several essential genes involved in the modulation of erythropoiesis. Part of a signaling cascade that is activated by increased cellular retinol and that leads to the activation of STAT5 (STAT5A or STAT5B). In addition, JAK2 mediates angiotensin-2-induced ARHGEF1 phosphorylation. Plays a role in cell cycle by phosphorylating CDKN1B. Cooperates with TEC through reciprocal phosphorylation to mediate cytokine-driven activation of FOS transcription. In the nucleus, plays a key role in chromatin by specifically mediating phosphorylation of 'Tyr-41' of histone H3 (H3Y41ph), a specific tag that promotes exclusion of CBX5 (HP1 alpha) from chromatin. Up-regulates the potassium voltage-gated channel activity of KCNA3. In Mus musculus (Mouse), this protein is Tyrosine-protein kinase JAK2.